The following is a 183-amino-acid chain: MLLEQGWLVGARRVPSPHYDCRPDDETPTLLVVHNISLPPGEFGGPWIDALFTGTIDPQAHPFFAEIAHLRVSAHCLIRRDGEIVQYVPFDKRAWHAGVSQYQGRERCNDFSIGIELEGTDTLAYTDAQYQQLAAVTRALIDCYPDIAKNMTGHCDIAPDRKTDPGPAFDWARFRVLVSKETT.

Residues 30–167 (LLVVHNISLP…APDRKTDPGP (138 aa)) enclose the N-acetylmuramoyl-L-alanine amidase domain. H34 serves as a coordination point for Zn(2+). Residue E116 is the Proton acceptor of the active site. Residues H154 and D164 each coordinate Zn(2+).

Belongs to the N-acetylmuramoyl-L-alanine amidase 2 family. Requires Zn(2+) as cofactor.

It localises to the cytoplasm. It carries out the reaction Hydrolyzes the link between N-acetylmuramoyl residues and L-amino acid residues in certain cell-wall glycopeptides.. In terms of biological role, involved in cell wall peptidoglycan recycling. Specifically cleaves the amide bond between the lactyl group of N-acetylmuramic acid and the alpha-amino group of the L-alanine in degradation products containing an anhydro N-acetylmuramyl moiety. Is also involved in beta-lactamase induction. This chain is 1,6-anhydro-N-acetylmuramyl-L-alanine amidase AmpD (ampD), found in Escherichia coli (strain K12).